A 321-amino-acid chain; its full sequence is Arabinan endo-1,5-alpha-L-arabinosidase A (321 aa).

Positions 1-19 (MYQLLSVASVPLLASLVHG) are cleaved as a signal peptide. The active-site Proton acceptor is the Asp34. The active-site Proton donor is Glu200. Residue Asn295 is glycosylated (N-linked (GlcNAc...) asparagine).

The protein belongs to the glycosyl hydrolase 43 family.

It carries out the reaction Endohydrolysis of (1-&gt;5)-alpha-arabinofuranosidic linkages in (1-&gt;5)-arabinans.. The protein operates within glycan metabolism; L-arabinan degradation. In terms of biological role, its preferred substrate is linear 1,5-alpha-L-arabinan. The enzyme activity is progressively reduced as 1,5-alpha-chains become shorter or more highly substituted. The protein is Arabinan endo-1,5-alpha-L-arabinosidase A (abnA) of Aspergillus niger.